The chain runs to 123 residues: CD59 glycoprotein (123 aa).

Residues Met1–Ser25 form the signal peptide. Positions Leu26–Ser103 constitute a UPAR/Ly6 domain. 5 cysteine pairs are disulfide-bonded: Cys28–Cys51, Cys31–Cys38, Cys44–Cys65, Cys71–Cys89, and Cys90–Cys95. Asn43 is a glycosylation site (N-linked (GlcNAc...) asparagine). The GPI-anchor amidated serine moiety is linked to residue Ser98. The propeptide at Asp99–Leu123 is removed in mature form.

In terms of assembly, interacts with T-cell surface antigen CD2. In terms of processing, N- and O-glycosylated. Expressed in all tissues tested (lung, testis liver, kidney, spleen, heart and skeletal muscle). Highest levels in lung and spleen, lowest levels in liver and skeletal muscle.

The protein resides in the cell membrane. The protein localises to the secreted. Its function is as follows. Potent inhibitor of the complement membrane attack complex (MAC) action, which protects self-cells from damage during complement activation. Acts by binding to the beta-haipins of C8 (C8A and C8B) components of the assembling MAC, forming an intermolecular beta-sheet that prevents incorporation of the multiple copies of C9 required for complete formation of the osmolytic pore. In Sus scrofa (Pig), this protein is CD59 glycoprotein.